The primary structure comprises 273 residues: Transcriptional regulator ICP22 homolog (273 aa).

Disordered regions lie at residues 1–57 and 160–273; these read GSCR…YGLP and YEQR…SARR. Over residues 11-33 the composition is skewed to low complexity; the sequence is PSTSPIIPSLSPSSGGNPSPRSS. Acidic residues-rich tracts occupy residues 178–194 and 204–224; these read EECEVSGDESPSEEEEA and SPEEESASSDFESFSDEEDDS. Residues 261-273 show a composition bias toward low complexity; that stretch reads VPKGGRPAKSARR.

The protein belongs to the herpesviridae ICP22 family.

This Equus caballus (Horse) protein is Transcriptional regulator ICP22 homolog.